The primary structure comprises 147 residues: DNA polymerase epsilon subunit 3 (147 aa).

Residue Ala2 is modified to N-acetylalanine. Phosphothreonine is present on Thr83. The stretch at 85-146 (LKEALEAYRR…EEQNEEEEVD (62 aa)) forms a coiled coil. A compositionally biased stretch (basic and acidic residues) spans 93–124 (RREQKGKKEASEQKKKDKDKKTDSEEQDKSRD). The segment at 93–147 (RREQKGKKEASEQKKKDKDKKTDSEEQDKSRDEDNDEDEERLEEEEQNEEEEVDN) is disordered. The residue at position 122 (Ser122) is a Phosphoserine. Residues 125–147 (EDNDEDEERLEEEEQNEEEEVDN) show a composition bias toward acidic residues.

In terms of assembly, component of the DNA polymerase epsilon complex consisting of four subunits: the catalytic subunit POLE and the accessory subunits POLE2, POLE3 and POLE4. Interaction with POLE4 is a prerequisite for further binding with POLE and POLE2. Heterodimer with CHRAC1; binds to DNA. Component of the CHRAC ISWI chromatin remodeling complex at least composed of SMARCA5/SNF2H, BAZ1A/ACF1, CHRAC1 and POLE3; the complex preferentially binds DNA through the CHRAC1-POLE3 heterodimer and possesses ATP-dependent nucleosome-remodeling activity. Within the complex, the heterodimer with CHRAC1 interacts with SMARCA5/SNF2H; the interaction is direct and enhances nucleosome sliding activity by the SMARCA5/SNF2H and BAZ1A/ACF1 interaction. Within the complex, the heterodimer with CHRAC1 interacts with BAZ1A/ACF1; the interactions are direct.

Its subcellular location is the nucleus. In terms of biological role, accessory component of the DNA polymerase epsilon complex. Participates in DNA repair and in chromosomal DNA replication. Forms a complex with CHRAC1 and binds naked DNA, which is then incorporated into chromatin, aided by the nucleosome-remodeling activity of ISWI/SNF2H and ACF1. Does not enhance nucleosome sliding activity of the ACF-5 ISWI chromatin remodeling complex. This is DNA polymerase epsilon subunit 3 (POLE3) from Bos taurus (Bovine).